The following is a 73-amino-acid chain: Adipokinetic prohormone type 2 (73 aa).

A signal peptide spans 1–20; the sequence is MCRIFIVLLVVAALAIIIEG. Q21 is modified (pyrrolidone carboxylic acid). At N30 the chain carries Asparagine amide. Positions 34-73 are excised as a propeptide; sequence SISSEQINDDCNPEEAIFQIYKLIVSEGERIRACQRDGKM.

In terms of tissue distribution, expressed in corpora cardiaca (CC), corpora allata (CA) and gnathal ganglion (GNG) (at protein level). Expression in CC and CA detected in all animals, expression in GNG detected in few animals (at protein level). Not expressed in antennal lobe (AL) (at protein level).

It is found in the secreted. This hormone, released from cells in the corpora cardiaca, causes release of diglycerides from the fat body and stimulation of muscles to use these diglycerides as an energy source during energy-demanding processes. In Agrotis ipsilon (Black cutworm moth), this protein is Adipokinetic prohormone type 2.